The sequence spans 1446 residues: Toll-like receptor 7 (1446 aa).

The first 16 residues, 1–16 (MAAILLLLLGFSWSLA), serve as a signal peptide directing secretion. Topologically, residues 17–1049 (VESALAPKES…QHGIPESYIP (1033 aa)) are extracellular. 23 LRR repeats span residues 133–156 (LQTL…AFEG), 158–180 (ATLK…TLEL), 188–211 (LKQL…FLCP), 213–235 (GNLQ…GFAD), 246–270 (GSEL…GISR), 271–294 (LRRL…ALAG), 295–318 (LASL…LFAG), 320–342 (KELR…LFHR), 344–368 (EQLL…TFAG), 369–392 (LIRL…TFKE), 393–416 (LYFL…AFLP), 417–440 (LYNL…LFNG), 442–464 (YVLS…VFKN), 465–488 (CSDL…LQDL), 489–511 (AMLR…SFKN), 513–535 (HQLT…MFQD), 536–559 (LPRL…SFDK), 561–582 (FELE…VFAT), 584–605 (VSLL…AFIP), 606–629 (SNLK…KLQE), 631–652 (IRVK…MSIP), 653–675 (NTIE…AFVD), and 677–699 (ANLA…QLRV). The region spanning 716 to 773 (NPFECDCTMDWLQRINNLTTRQHPRVMDMANIECVMPHARGAAVRPLSGLRPQDFLCR) is the LRRCT domain. 3 disulfides stabilise this stretch: Cys-722–Cys-772, Cys-796–Cys-802, and Cys-800–Cys-815. LRR repeat units follow at residues 828 to 851 (PMDS…AFIG), 852 to 875 (RKNL…TFAS), 876 to 899 (LASL…EFEQ), 900 to 923 (LSAL…TLAP), 925 to 947 (AALE…QMHA), and 951 to 979 (GTRL…SYVA). Cysteines 966 and 993 form a disulfide. The helical transmembrane segment at 1050 to 1070 (LLAAALALLFLLVVIAMVFAF) threads the bilayer. Over 1071-1446 (RESLRIWLFA…QGPHVQAYLV (376 aa)) the chain is Cytoplasmic. One can recognise a TIR domain in the interval 1096 to 1233 (KLYDAVLLHS…HFWEKLRYAL (138 aa)). Disordered regions lie at residues 1301-1332 (QNYS…NHHL) and 1388-1446 (RPKR…AYLV). Positions 1395–1413 (HLQQAQAGTLGSKASQAAH) are enriched in polar residues. Over residues 1414 to 1426 (QQQQQQQQQQQQQ) the composition is skewed to low complexity. Positions 1427–1439 (PNPTAVSGQQQGP) are enriched in polar residues.

Belongs to the Toll-like receptor family. As to expression, expressed in the fan-shaped body and the ellipsoid body, which are components of the locomotion center in the CNS (at protein level).

It localises to the cell membrane. Functionally, toll-related receptor which binds to the neurotrophins NT1 and spz5. Essential for antiviral autophagy, it detects and binds to the vesicular stomatitis virus (vsv) following infection. This role is likely to be independent of the canonical Toll, immune deficiency, and JAK-STAT signaling pathways. Functions in olfactory circuit assembly by promoting synaptic partner matching between olfactory receptor neurons (ORN) axons and projection neurons (PN) dendrites partners in the antennal lobe. Function in the Va1d ORNs is necessary and sufficient for correct targeting to their partner PN dendrites. Also involved in the targeting of other classes of ORN axons. Functions with Toll-6 to regulate motor axon targeting and neuronal survival in the central nervous system (CNS). May be an upstream component of the NF-kappa-B (rel) regulatory cascade. The polypeptide is Toll-like receptor 7 (Drosophila melanogaster (Fruit fly)).